Reading from the N-terminus, the 287-residue chain is Protease HtpX (287 aa).

2 helical membrane passes run 4–24 (VMLF…VLNI) and 36–56 (LSGL…ISLM). His143 contacts Zn(2+). Residue Glu144 is part of the active site. Residue His147 coordinates Zn(2+). A run of 2 helical transmembrane segments spans residues 158–178 (LMQG…ANIV) and 192–212 (MVYF…ASFI). Residue Glu221 participates in Zn(2+) binding.

The protein belongs to the peptidase M48B family. The cofactor is Zn(2+).

The protein localises to the cell inner membrane. This Vibrio atlanticus (strain LGP32) (Vibrio splendidus (strain Mel32)) protein is Protease HtpX.